A 255-amino-acid polypeptide reads, in one-letter code: Imidazole glycerol phosphate synthase subunit HisF (255 aa).

Active-site residues include Asp-11 and Asp-130.

It belongs to the HisA/HisF family. As to quaternary structure, heterodimer of HisH and HisF.

It is found in the cytoplasm. It catalyses the reaction 5-[(5-phospho-1-deoxy-D-ribulos-1-ylimino)methylamino]-1-(5-phospho-beta-D-ribosyl)imidazole-4-carboxamide + L-glutamine = D-erythro-1-(imidazol-4-yl)glycerol 3-phosphate + 5-amino-1-(5-phospho-beta-D-ribosyl)imidazole-4-carboxamide + L-glutamate + H(+). Its pathway is amino-acid biosynthesis; L-histidine biosynthesis; L-histidine from 5-phospho-alpha-D-ribose 1-diphosphate: step 5/9. Functionally, IGPS catalyzes the conversion of PRFAR and glutamine to IGP, AICAR and glutamate. The HisF subunit catalyzes the cyclization activity that produces IGP and AICAR from PRFAR using the ammonia provided by the HisH subunit. This is Imidazole glycerol phosphate synthase subunit HisF from Rhodopseudomonas palustris (strain ATCC BAA-98 / CGA009).